The chain runs to 131 residues: Small ribosomal subunit protein uS8 (131 aa).

The protein belongs to the universal ribosomal protein uS8 family. In terms of assembly, part of the 30S ribosomal subunit. Contacts proteins S5 and S12.

Functionally, one of the primary rRNA binding proteins, it binds directly to 16S rRNA central domain where it helps coordinate assembly of the platform of the 30S subunit. The chain is Small ribosomal subunit protein uS8 from Chlorobaculum tepidum (strain ATCC 49652 / DSM 12025 / NBRC 103806 / TLS) (Chlorobium tepidum).